Consider the following 343-residue polypeptide: Selenide, water dikinase (343 aa).

Cys-15 is a catalytic residue. Residues Lys-18 and 46 to 48 contribute to the ATP site; that span reads HKD. Residue Asp-49 participates in Mg(2+) binding. ATP is bound by residues Asp-66, Asp-89, and 137-139; that span reads GHS. A Mg(2+)-binding site is contributed by Asp-89. Position 225 (Asp-225) interacts with Mg(2+).

This sequence belongs to the selenophosphate synthase 1 family. Class I subfamily. In terms of assembly, homodimer. The cofactor is Mg(2+).

The enzyme catalyses hydrogenselenide + ATP + H2O = selenophosphate + AMP + phosphate + 2 H(+). In terms of biological role, synthesizes selenophosphate from selenide and ATP. This chain is Selenide, water dikinase, found in Sulfurimonas denitrificans (strain ATCC 33889 / DSM 1251) (Thiomicrospira denitrificans (strain ATCC 33889 / DSM 1251)).